Consider the following 1108-residue polypeptide: Serine/threonine-protein kinase AKL1 (1108 aa).

The residue at position 2 (serine 2) is an N-acetylserine. Serine 10 carries the post-translational modification Phosphoserine. A Protein kinase domain is found at 35 to 319 (VEVVNYLAEG…IYQVLYHLCE (285 aa)). Residues 41–49 (LAEGGFAQI) and lysine 70 contribute to the ATP site. Aspartate 181 functions as the Proton acceptor in the catalytic mechanism. Residues 405–466 (IPSQNVGQEL…QSPGIEDKSI (62 aa)) are disordered. At serine 407 the chain carries Phosphoserine. Residues 419–435 (ESQSDQRKSTLSEDKSS) show a composition bias toward basic and acidic residues. Positions 436 to 449 (RTTSNANSSGTANN) are enriched in low complexity. Threonine 471 carries the phosphothreonine modification. Over residues 493–513 (KQSSDPTISEQSPRLNTQSLP) the composition is skewed to polar residues. The disordered stretch occupies residues 493–534 (KQSSDPTISEQSPRLNTQSLPQRQKSTSSYSSGGRSMKSTSY). The residue at position 504 (serine 504) is a Phosphoserine. Positions 514–534 (QRQKSTSSYSSGGRSMKSTSY) are enriched in low complexity. Serine 541 and serine 574 each carry phosphoserine. The segment covering 590-629 (QQQGQRYQQAQNQTGTQGNTFPDESQYQSRVEQQQQQQDQ) has biased composition (low complexity). 2 disordered regions span residues 590–663 (QQQG…GDSG) and 765–791 (EDMR…HSSS). Polar residues predominate over residues 781–791 (NSANEPMHSSS). Serine 801 is modified (phosphoserine). The interval 807–838 (AGKQSFQDTNEPQTGGIEDAGGSGTIKGSNNN) is disordered. The segment covering 810 to 819 (QSFQDTNEPQ) has biased composition (polar residues). Serine 846 is modified (phosphoserine). Residues 858–1108 (GAAVSSFSSS…SFFSVFRSEK (251 aa)) form a disordered region. Over residues 859–872 (AAVSSFSSSSSSAS) the composition is skewed to low complexity. Residues 910–934 (DDARRGKTAERRPLHNERGHKDQAR) show a composition bias toward basic and acidic residues. Polar residues predominate over residues 935-976 (SSDASKSNQFKSKDFSSVSTRQPRQSLDLNFQEVNLSSPTLT). Residues serine 953 and serine 960 each carry the phosphoserine modification. Positions 1006-1048 (ENKRHSTGHELSTRSNGKHETHRTGSKQRHDLERYRHSKDKDS) are enriched in basic and acidic residues. Residues lysine 1008 and lysine 1046 each participate in a glycyl lysine isopeptide (Lys-Gly) (interchain with G-Cter in ubiquitin) cross-link. A Phosphoserine modification is found at serine 1048. Over residues 1049-1060 (NSSITISTSTPS) the composition is skewed to low complexity. Positions 1071–1082 (QSLDLERVRREA) are enriched in basic and acidic residues. A Phosphoserine modification is found at serine 1072.

Belongs to the protein kinase superfamily. Ser/Thr protein kinase family.

It catalyses the reaction L-seryl-[protein] + ATP = O-phospho-L-seryl-[protein] + ADP + H(+). The catalysed reaction is L-threonyl-[protein] + ATP = O-phospho-L-threonyl-[protein] + ADP + H(+). Functionally, phosphorylates SCD5. This chain is Serine/threonine-protein kinase AKL1 (AKL1), found in Saccharomyces cerevisiae (strain ATCC 204508 / S288c) (Baker's yeast).